The following is a 272-amino-acid chain: 2-succinyl-6-hydroxy-2,4-cyclohexadiene-1-carboxylate synthase (272 aa).

This sequence belongs to the AB hydrolase superfamily. MenH family. Monomer.

The catalysed reaction is 5-enolpyruvoyl-6-hydroxy-2-succinyl-cyclohex-3-ene-1-carboxylate = (1R,6R)-6-hydroxy-2-succinyl-cyclohexa-2,4-diene-1-carboxylate + pyruvate. The protein operates within quinol/quinone metabolism; 1,4-dihydroxy-2-naphthoate biosynthesis; 1,4-dihydroxy-2-naphthoate from chorismate: step 3/7. Its pathway is quinol/quinone metabolism; menaquinone biosynthesis. In terms of biological role, catalyzes a proton abstraction reaction that results in 2,5-elimination of pyruvate from 2-succinyl-5-enolpyruvyl-6-hydroxy-3-cyclohexene-1-carboxylate (SEPHCHC) and the formation of 2-succinyl-6-hydroxy-2,4-cyclohexadiene-1-carboxylate (SHCHC). This is 2-succinyl-6-hydroxy-2,4-cyclohexadiene-1-carboxylate synthase from Yersinia pseudotuberculosis serotype IB (strain PB1/+).